Here is a 467-residue protein sequence, read N- to C-terminus: UDP-N-acetylmuramate--L-alanine ligase (467 aa).

112-118 (GTHGKTT) serves as a coordination point for ATP.

This sequence belongs to the MurCDEF family.

Its subcellular location is the cytoplasm. The enzyme catalyses UDP-N-acetyl-alpha-D-muramate + L-alanine + ATP = UDP-N-acetyl-alpha-D-muramoyl-L-alanine + ADP + phosphate + H(+). It participates in cell wall biogenesis; peptidoglycan biosynthesis. Cell wall formation. The sequence is that of UDP-N-acetylmuramate--L-alanine ligase from Paraburkholderia xenovorans (strain LB400).